The chain runs to 166 residues: Sec-independent protein translocase protein TatB (166 aa).

The chain crosses the membrane as a helical span at residues 2–22; that stretch reads FNDIGALELLTLGVLAVLVFG. The tract at residues 110-166 is disordered; it reads TPAASDTANSAVNGSAGAAADGVTTSLTKTGETTPDLLKKAPQQAQPERPPFDADAT. The segment covering 117-129 has biased composition (low complexity); that stretch reads ANSAVNGSAGAAA. The segment covering 132 to 142 has biased composition (polar residues); it reads VTTSLTKTGET.

The protein belongs to the TatB family. In terms of assembly, the Tat system comprises two distinct complexes: a TatABC complex, containing multiple copies of TatA, TatB and TatC subunits, and a separate TatA complex, containing only TatA subunits. Substrates initially bind to the TatABC complex, which probably triggers association of the separate TatA complex to form the active translocon.

The protein localises to the cell membrane. Its function is as follows. Part of the twin-arginine translocation (Tat) system that transports large folded proteins containing a characteristic twin-arginine motif in their signal peptide across membranes. Together with TatC, TatB is part of a receptor directly interacting with Tat signal peptides. TatB may form an oligomeric binding site that transiently accommodates folded Tat precursor proteins before their translocation. This is Sec-independent protein translocase protein TatB from Streptomyces griseus subsp. griseus (strain JCM 4626 / CBS 651.72 / NBRC 13350 / KCC S-0626 / ISP 5235).